The chain runs to 639 residues: MELPWLSLTTFTLSLLIYFSSTTQAFKRCPNCGSTRVPYPLSTGLDCGDPGYRIRCDNYGSLWFDTLNGSTNPIKTIDPSGQRFVLRPPGFEQNKCVSVDIKYHGIQLDLNLPFNVSCSNTVIIMNCTKDGLDAYSSQGFNCSDNSLCHKFLNANLEARGNCRGVTSCCWYKTGASVNTYKVYRARPDMCSAYQSFMNLDLTIPVSKWGEPAVEILWEAPREPVCKSQGDCRDLLNSVCSNDSTNLGQKRCFCKKGFQWDSVNAVCEVNRCSKRKSCKRWSNLPLLGGLAGGVGAILIAGFITKTIVSKQNRRIAGNQSWASVRKLHRNLLSINSTGLDRIFTGKEIVKATDNFAKSNLLGFGGFGEVFKGNLDDGTTVAVKRAKLGNEKSIYQIVNEVQILCQVSHKNLVKLLGCCIELEMPVLVYEFVPNGTLFEHIYGGGGGGGGLYDHLPLRRRLMIAHQTAQGLDYLHSSSSPPIYHRDVKSSNILLDENLDVKVADFGLSRLGVSDVSHVTTCAQGTLGYLDPEYYLNFQLTDKSDVYSFGVVLFELLTCKKAIDFNREEEDVNLVVFVRKALKEGRLMDVIDPVIGIGATEKEIESMKALGVLAELCVKETRQCRPTMQVAAKEIENILHGI.

The first 25 residues, 1 to 25, serve as a signal peptide directing secretion; sequence MELPWLSLTTFTLSLLIYFSSTTQA. The Extracellular portion of the chain corresponds to 26–282; sequence FKRCPNCGST…KRKSCKRWSN (257 aa). Residues N68, N115, N126, N141, and N241 are each glycosylated (N-linked (GlcNAc...) asparagine). The helical transmembrane segment at 283-303 threads the bilayer; that stretch reads LPLLGGLAGGVGAILIAGFIT. The Cytoplasmic segment spans residues 304–639; sequence KTIVSKQNRR…KEIENILHGI (336 aa). The Protein kinase domain occupies 354–639; the sequence is FAKSNLLGFG…KEIENILHGI (286 aa). ATP contacts are provided by residues 360–368 and K382; that span reads LGFGGFGEV. D484 (proton acceptor) is an active-site residue.

The protein belongs to the protein kinase superfamily. Ser/Thr protein kinase family.

The protein localises to the membrane. It carries out the reaction L-seryl-[protein] + ATP = O-phospho-L-seryl-[protein] + ADP + H(+). The catalysed reaction is L-threonyl-[protein] + ATP = O-phospho-L-threonyl-[protein] + ADP + H(+). Its function is as follows. Putative serine/threonine-protein kinase that may function as a signaling receptor of extracellular matrix component. This is Wall-associated receptor kinase-like 15 (WAKL15) from Arabidopsis thaliana (Mouse-ear cress).